We begin with the raw amino-acid sequence, 1627 residues long: DNA topoisomerase 2-beta (1627 aa).

ATP contacts are provided by residues Asn117, Asn146, 174–176 (SSN), and 187–194 (GRNGYGAK). The interaction with DNA stretch occupies residues 368–370 (KKK). 402–404 (QTK) contacts ATP. In terms of domain architecture, Toprim spans 481–598 (CTLILTEGDS…SLLKHGFLEE (118 aa)). 3 residues coordinate Mg(2+): Glu487, Asp567, and Asp569. Residues 741–1194 (IPSLVDGLKP…SASDLWKEDL (454 aa)) form the Topo IIA-type catalytic domain. The active-site O-(5'-phospho-DNA)-tyrosine intermediate is the Tyr831. Positions 1016–1025 (KLQTSLTCNS) are interaction with DNA. Disordered regions lie at residues 1115–1144 (AWKEAQEKAAEEEDPQNANDDASSASGSTS), 1224–1248 (KVGKPKMKKLQLEETMPSPFGRRIV), 1283–1365 (EFGG…DSLL), and 1378–1627 (DFSK…DMFN). Low complexity predominate over residues 1131-1144 (NANDDASSASGSTS). Residues 1296–1305 (TVNTAASGTK) show a composition bias toward polar residues. Residues 1339–1349 (PWSDDESKSES) show a composition bias toward basic and acidic residues. Composition is skewed to acidic residues over residues 1381–1392 (KEEDDAHDDDDA) and 1412–1428 (REDEFVPSDSVEKDEYD). 2 stretches are compositionally biased toward basic and acidic residues: residues 1436–1448 (PSPEKMSQEKKNQ) and 1462–1471 (KTDDDTTKLD). 2 stretches are compositionally biased toward basic residues: residues 1542–1552 (GKGRGAKKRKT) and 1566–1578 (KAPKSTPCKKSKK). The span at 1616–1627 (ESDEDDDFDMFN) shows a compositional bias: acidic residues.

This sequence belongs to the type II topoisomerase family. As to quaternary structure, homodimer. It depends on Mg(2+) as a cofactor. Mn(2+) serves as cofactor. Requires Ca(2+) as cofactor.

It is found in the nucleus. It localises to the nucleolus. The protein localises to the nucleoplasm. The enzyme catalyses ATP-dependent breakage, passage and rejoining of double-stranded DNA.. Key decatenating enzyme that alters DNA topology by binding to two double-stranded DNA molecules, generating a double-stranded break in one of the strands, passing the intact strand through the broken strand, and religating the broken strand. Plays a role in B-cell differentiation. This Gallus gallus (Chicken) protein is DNA topoisomerase 2-beta (TOP2B).